We begin with the raw amino-acid sequence, 492 residues long: Ketol-acid reductoisomerase (NADP(+)) (492 aa).

The KARI N-terminal Rossmann domain occupies 17–208 (LGVCEFMDRS…GGDRAGVLKS (192 aa)). NADP(+) is bound by residues 45-48 (CGAQ), Arg-68, Arg-76, Ser-78, and 108-110 (DKQ). His-132 is a catalytic residue. Gly-158 is an NADP(+) binding site. 2 consecutive KARI C-terminal knotted domains span residues 209–353 (SFVA…AEQE) and 354–487 (YYDN…MTEM). Mg(2+) contacts are provided by Asp-217, Glu-221, Glu-389, and Glu-393. Ser-414 lines the substrate pocket.

This sequence belongs to the ketol-acid reductoisomerase family. Requires Mg(2+) as cofactor.

The enzyme catalyses (2R)-2,3-dihydroxy-3-methylbutanoate + NADP(+) = (2S)-2-acetolactate + NADPH + H(+). It carries out the reaction (2R,3R)-2,3-dihydroxy-3-methylpentanoate + NADP(+) = (S)-2-ethyl-2-hydroxy-3-oxobutanoate + NADPH + H(+). It participates in amino-acid biosynthesis; L-isoleucine biosynthesis; L-isoleucine from 2-oxobutanoate: step 2/4. Its pathway is amino-acid biosynthesis; L-valine biosynthesis; L-valine from pyruvate: step 2/4. Functionally, involved in the biosynthesis of branched-chain amino acids (BCAA). Catalyzes an alkyl-migration followed by a ketol-acid reduction of (S)-2-acetolactate (S2AL) to yield (R)-2,3-dihydroxy-isovalerate. In the isomerase reaction, S2AL is rearranged via a Mg-dependent methyl migration to produce 3-hydroxy-3-methyl-2-ketobutyrate (HMKB). In the reductase reaction, this 2-ketoacid undergoes a metal-dependent reduction by NADPH to yield (R)-2,3-dihydroxy-isovalerate. The chain is Ketol-acid reductoisomerase (NADP(+)) from Cytophaga hutchinsonii (strain ATCC 33406 / DSM 1761 / CIP 103989 / NBRC 15051 / NCIMB 9469 / D465).